A 462-amino-acid polypeptide reads, in one-letter code: Trigger factor (462 aa).

The PPIase FKBP-type domain maps to 163–248; it reads GDEVLFDFKG…LKEVRRVNSL (86 aa). A disordered region spans residues 442 to 462; the sequence is SMQEKQTQEPAEEKVETKEEK. A compositionally biased stretch (basic and acidic residues) spans 452 to 462; the sequence is AEEKVETKEEK.

The protein belongs to the FKBP-type PPIase family. Tig subfamily.

It is found in the cytoplasm. The enzyme catalyses [protein]-peptidylproline (omega=180) = [protein]-peptidylproline (omega=0). Involved in protein export. Acts as a chaperone by maintaining the newly synthesized protein in an open conformation. Functions as a peptidyl-prolyl cis-trans isomerase. This is Trigger factor from Mycoplasmopsis synoviae (strain 53) (Mycoplasma synoviae).